The following is a 1836-amino-acid chain: U3 small nucleolar RNA-associated protein 10 (1836 aa).

One copy of the HEAT 1 repeat lies at 245–283; it reads EVVGFLLLPSKYETLRNIDVDTRLTAYSIIAVLASIIPI. The tract at residues 453 to 473 is disordered; that stretch reads SNSSVRDSDDVEFDAGEEDNN. The span at 461-473 shows a compositional bias: acidic residues; sequence DDVEFDAGEEDNN. HEAT repeat units follow at residues 585 to 623 and 813 to 850; these read PLDL…TTTS and VENR…DQDL. The disordered stretch occupies residues 863–883; that stretch reads QIPEQGPAKRRRRSSSSTKQA. 2 consecutive transmembrane segments (helical) span residues 998-1018 and 1085-1105; these read LLLV…HSVM and LFTY…LLFL. HEAT repeat units lie at residues 1333–1372, 1749–1787, and 1790–1828; these read ESVL…KFGA, ETLV…KMGE, and LTYL…NVLG.

Belongs to the HEATR1/UTP10 family. Component of the ribosomal small subunit (SSU) processome.

It is found in the nucleus. The protein localises to the nucleolus. It localises to the membrane. Functionally, involved in nucleolar processing of pre-18S ribosomal RNA. Involved in ribosome biosynthesis. This chain is U3 small nucleolar RNA-associated protein 10, found in Scheffersomyces stipitis (strain ATCC 58785 / CBS 6054 / NBRC 10063 / NRRL Y-11545) (Yeast).